A 469-amino-acid chain; its full sequence is 3-isopropylmalate dehydratase large subunit (469 aa).

Cys349, Cys410, and Cys413 together coordinate [4Fe-4S] cluster.

The protein belongs to the aconitase/IPM isomerase family. LeuC type 1 subfamily. As to quaternary structure, heterodimer of LeuC and LeuD. The cofactor is [4Fe-4S] cluster.

It carries out the reaction (2R,3S)-3-isopropylmalate = (2S)-2-isopropylmalate. Its pathway is amino-acid biosynthesis; L-leucine biosynthesis; L-leucine from 3-methyl-2-oxobutanoate: step 2/4. In terms of biological role, catalyzes the isomerization between 2-isopropylmalate and 3-isopropylmalate, via the formation of 2-isopropylmaleate. This chain is 3-isopropylmalate dehydratase large subunit, found in Neisseria meningitidis serogroup C / serotype 2a (strain ATCC 700532 / DSM 15464 / FAM18).